Consider the following 534-residue polypeptide: Prolyl 4-hydroxylase subunit alpha-1 (534 aa).

An N-terminal signal peptide occupies residues 1–17; sequence MIWYILIIGILLPQSLA. An N-linked (GlcNAc...) asparagine glycan is attached at Asn113. The stretch at 205-238 is one TPR repeat; that stretch reads VSVLDYLSYAVYQQGDLDKALLLTKKLLELDPEH. Asn259 carries N-linked (GlcNAc...) asparagine glycosylation. In terms of domain architecture, Fe2OG dioxygenase spans 411 to 519; it reads TAEELQVANY…KWVSNKWLHE (109 aa). Fe cation is bound by residues His429, Asp431, and His500. Residue Lys510 participates in 2-oxoglutarate binding.

It belongs to the P4HA family. Heterotetramer of two alpha-1 chains and two beta chains (P4HB)(the beta chain is the multi-functional PDI), where P4HB plays the role of a structural subunit; this tetramer catalyzes the formation of 4-hydroxyproline in collagen. It depends on Fe(2+) as a cofactor. L-ascorbate is required as a cofactor. As to expression, expressed in the heart, liver, skeletal muscle, kidney, placenta, lung and pancreas.

The protein localises to the endoplasmic reticulum lumen. The catalysed reaction is L-prolyl-[collagen] + 2-oxoglutarate + O2 = trans-4-hydroxy-L-prolyl-[collagen] + succinate + CO2. Inhibited by poly(L-proline). Catalyzes the post-translational formation of 4-hydroxyproline in -Xaa-Pro-Gly- sequences in collagens and other proteins. This chain is Prolyl 4-hydroxylase subunit alpha-1 (P4HA1), found in Homo sapiens (Human).